A 672-amino-acid chain; its full sequence is Glycine--tRNA ligase beta subunit (672 aa).

This sequence belongs to the class-II aminoacyl-tRNA synthetase family. As to quaternary structure, tetramer of two alpha and two beta subunits.

The protein resides in the cytoplasm. It carries out the reaction tRNA(Gly) + glycine + ATP = glycyl-tRNA(Gly) + AMP + diphosphate. The sequence is that of Glycine--tRNA ligase beta subunit from Thermotoga sp. (strain RQ2).